Here is a 360-residue protein sequence, read N- to C-terminus: Iron uptake protein A1 (360 aa).

Residues 1-28 (MVQKLSRRLFLSIGTAFTVVVGSQLLSS) form the signal peptide. A lipid anchor (N-palmitoyl cysteine) is attached at C29. C29 carries the S-diacylglycerol cysteine lipid modification. Fe cation contacts are provided by H54, Y55, Y185, Y241, and Y242.

Belongs to the bacterial solute-binding protein 1 family.

Its subcellular location is the cellular thylakoid membrane. The protein localises to the cell membrane. Its function is as follows. Plays an important role in protecting the acceptor side of photosystem II (PSII) against oxidative damage, especially under iron-limiting growth conditions. The differing subcellular locations of futA1 (predominantly thylakoid lumen) and futA2 (predominantly periplasmic) suggest they may fulfill different roles. In terms of biological role, a major iron-binding protein involved in Fe(3+) uptake, probably part of a periplasmic ABC transporter complex futA1A2BC (TC 3.A.1.10.2) involved in Fe(3+) ion import (ferric iron). This protein and futA2 (slr0531) may be subunit proteins that have redundant or overlapping substrate-binding functions. This is Iron uptake protein A1 (futA1) from Synechocystis sp. (strain ATCC 27184 / PCC 6803 / Kazusa).